A 222-amino-acid polypeptide reads, in one-letter code: Octanoyltransferase (222 aa).

Residues 34–214 (AEAPSTVLLL…EFRKHEEALV (181 aa)) enclose the BPL/LPL catalytic domain. Residues 72-79 (RGGKLTWH), 144-146 (AIG), and 157-159 (GIA) each bind substrate. Cys175 acts as the Acyl-thioester intermediate in catalysis.

Belongs to the LipB family.

The protein resides in the cytoplasm. It carries out the reaction octanoyl-[ACP] + L-lysyl-[protein] = N(6)-octanoyl-L-lysyl-[protein] + holo-[ACP] + H(+). The protein operates within protein modification; protein lipoylation via endogenous pathway; protein N(6)-(lipoyl)lysine from octanoyl-[acyl-carrier-protein]: step 1/2. In terms of biological role, catalyzes the transfer of endogenously produced octanoic acid from octanoyl-acyl-carrier-protein onto the lipoyl domains of lipoate-dependent enzymes. Lipoyl-ACP can also act as a substrate although octanoyl-ACP is likely to be the physiological substrate. The protein is Octanoyltransferase of Arthrobacter sp. (strain FB24).